Reading from the N-terminus, the 384-residue chain is Neuropeptide Y receptor type 1 (384 aa).

The Extracellular segment spans residues 1–44 (MNSTLFSQVENHSVHSNFSEKNAQLLAFENDDCHLPLAMIFTLA). N-linked (GlcNAc...) asparagine glycosylation is found at asparagine 2, asparagine 11, and asparagine 17. A helical membrane pass occupies residues 45-65 (LAYGAVIILGVSGNLALIIII). Over 66 to 76 (LKQKEMRNVTN) the chain is Cytoplasmic. Residues 77 to 97 (ILIVNLSFSDLLVAIMCLPFT) traverse the membrane as a helical segment. At 98-116 (FVYTLMDHWVFGEAMCKLN) the chain is on the extracellular side. Cysteine 113 and cysteine 198 are oxidised to a cystine. The chain crosses the membrane as a helical span at residues 117–137 (PFVQCVSITVSIFSLVLIAVE). Residues 138–154 (RHQLIINPRGWRPNNRH) lie on the Cytoplasmic side of the membrane. Residues 155 to 175 (AYVGIAVIWVLAVASSLPFLI) form a helical membrane-spanning segment. The Extracellular segment spans residues 176-211 (YQVMTDEPFQNVTLDAYKDKYVCFDQFPSDSHRLSY). The chain crosses the membrane as a helical span at residues 212–232 (TTLLLVLQYFGPLCFIFICYF). Residues 233–260 (KIYIRLKRRNNMMDKMRDNKYRSSETKR) are Cytoplasmic-facing. The helical transmembrane segment at 261 to 281 (INIMLLSIVVAFAVCWLPLTI) threads the bilayer. Topologically, residues 282 to 299 (FNTVFDWNHQIIATCNHN) are extracellular. A helical transmembrane segment spans residues 300–320 (LLFLLCHLTAMISTCVNPIFY). The Cytoplasmic portion of the chain corresponds to 321 to 384 (GFLNKNFQRD…INNNDDNEKI (64 aa)). A lipid anchor (S-palmitoyl cysteine) is attached at cysteine 338. Phosphoserine is present on serine 368.

Belongs to the G-protein coupled receptor 1 family.

Its subcellular location is the cell membrane. Receptor for neuropeptide Y and peptide YY. The rank order of affinity of this receptor for pancreatic polypeptides is NPY &gt; [Pro-34] PYY, PYY and [Leu-31, Pro-34] NPY &gt; NPY (2-36) &gt; [Ile-31, Gln-34] PP and PYY (3-36) &gt; PP &gt; NPY free acid. This Homo sapiens (Human) protein is Neuropeptide Y receptor type 1 (NPY1R).